We begin with the raw amino-acid sequence, 200 residues long: Proteasome subunit beta 2 (200 aa).

Met1 is a propeptide (removed in mature form; by autocatalysis). Residue Thr2 is the Nucleophile of the active site.

This sequence belongs to the peptidase T1B family. The 20S proteasome core is composed of 14 alpha and 14 beta subunits that assemble into four stacked heptameric rings, resulting in a barrel-shaped structure. The two inner rings, each composed of seven catalytic beta subunits, are sandwiched by two outer rings, each composed of seven alpha subunits. The catalytic chamber with the active sites is on the inside of the barrel. Has a gated structure, the ends of the cylinder being occluded by the N-termini of the alpha-subunits. Is capped at one or both ends by the proteasome regulatory ATPase, PAN.

Its subcellular location is the cytoplasm. The catalysed reaction is Cleavage of peptide bonds with very broad specificity.. Its activity is regulated as follows. The formation of the proteasomal ATPase PAN-20S proteasome complex, via the docking of the C-termini of PAN into the intersubunit pockets in the alpha-rings, triggers opening of the gate for substrate entry. Interconversion between the open-gate and close-gate conformations leads to a dynamic regulation of the 20S proteasome proteolysis activity. Component of the proteasome core, a large protease complex with broad specificity involved in protein degradation. The sequence is that of Proteasome subunit beta 2 from Pyrobaculum islandicum (strain DSM 4184 / JCM 9189 / GEO3).